A 241-amino-acid polypeptide reads, in one-letter code: Small ribosomal subunit protein uS2 (241 aa).

It belongs to the universal ribosomal protein uS2 family.

This Yersinia pestis bv. Antiqua (strain Antiqua) protein is Small ribosomal subunit protein uS2.